We begin with the raw amino-acid sequence, 120 residues long: Cytochrome b5 (120 aa).

Residues 2–78 (PKVYSYQEVA…LKGLYIGDVD (77 aa)) form the Cytochrome b5 heme-binding domain. Heme-binding residues include H37 and H61. The helical transmembrane segment at 98 to 118 (GSGTLVVILAILMLGVAYYLL) threads the bilayer.

Belongs to the cytochrome b5 family.

The protein localises to the endoplasmic reticulum membrane. It is found in the microsome membrane. Membrane bound hemoprotein which function as an electron carrier for several membrane bound oxygenases. It plays a role in fatty-acid desaturation and is also involved in several steps of the sterol biosynthesis pathway, particularly in the 4-demethylation of the 4,4'-dimethyl zymosterol. This chain is Cytochrome b5 (CYB5), found in Saccharomyces cerevisiae (strain ATCC 204508 / S288c) (Baker's yeast).